The sequence spans 385 residues: Flap endonuclease 1 (385 aa).

The tract at residues 1–104 (MGILGLSKLI…GELAKRAERR (104 aa)) is N-domain. Asp-34 is a binding site for Mg(2+). DNA contacts are provided by Arg-47 and Arg-70. Residues Asp-86, Glu-158, Glu-160, Asp-179, and Asp-181 each coordinate Mg(2+). Residues 122–253 (GIEKFNRRLV…KRAIELINTY (132 aa)) are I-domain. Position 158 (Glu-158) interacts with DNA. Gly-231 and Asp-233 together coordinate DNA. Asp-233 contacts Mg(2+). The segment at 336 to 344 (TQVRLDSFF) is interaction with PCNA. Residues 346-385 (TLPSTPNATNAAKRKADEAKKSANNKKAKTSGGGRGRRPK) are disordered. Over residues 368 to 385 (ANNKKAKTSGGGRGRRPK) the composition is skewed to basic residues.

The protein belongs to the XPG/RAD2 endonuclease family. FEN1 subfamily. Interacts with PCNA. Three molecules of FEN1 bind to one PCNA trimer with each molecule binding to one PCNA monomer. PCNA stimulates the nuclease activity without altering cleavage specificity. The cofactor is Mg(2+). Post-translationally, phosphorylated. Phosphorylation upon DNA damage induces relocalization to the nuclear plasma.

It localises to the nucleus. Its subcellular location is the nucleolus. The protein localises to the nucleoplasm. The protein resides in the mitochondrion. Functionally, structure-specific nuclease with 5'-flap endonuclease and 5'-3' exonuclease activities involved in DNA replication and repair. During DNA replication, cleaves the 5'-overhanging flap structure that is generated by displacement synthesis when DNA polymerase encounters the 5'-end of a downstream Okazaki fragment. It enters the flap from the 5'-end and then tracks to cleave the flap base, leaving a nick for ligation. Also involved in the long patch base excision repair (LP-BER) pathway, by cleaving within the apurinic/apyrimidinic (AP) site-terminated flap. Acts as a genome stabilization factor that prevents flaps from equilibrating into structures that lead to duplications and deletions. Also possesses 5'-3' exonuclease activity on nicked or gapped double-stranded DNA, and exhibits RNase H activity. Also involved in replication and repair of rDNA and in repairing mitochondrial DNA. This chain is Flap endonuclease 1, found in Drosophila sechellia (Fruit fly).